The chain runs to 395 residues: Putative phosphatidate cytidylyltransferase (395 aa).

Transmembrane regions (helical) follow at residues 13–33 (STVF…SAFA), 78–98 (FAFG…MNWE), 115–135 (SLLS…VIYF), 144–164 (WIWT…YMIS), 177–197 (IYSL…YFSV), 201–221 (WTTI…AYLF), 242–262 (AFFG…LYSI), 306–326 (FYIY…IFAI), and 358–378 (FDSS…AGIS).

Belongs to the CDS family.

It is found in the cell membrane. The catalysed reaction is a 1,2-diacyl-sn-glycero-3-phosphate + CTP + H(+) = a CDP-1,2-diacyl-sn-glycerol + diphosphate. Its pathway is phospholipid metabolism; CDP-diacylglycerol biosynthesis; CDP-diacylglycerol from sn-glycerol 3-phosphate: step 3/3. In Mycoplasma pneumoniae (strain ATCC 29342 / M129 / Subtype 1) (Mycoplasmoides pneumoniae), this protein is Putative phosphatidate cytidylyltransferase (cdsA).